The following is a 261-amino-acid chain: Undecaprenyl-diphosphatase (261 aa).

8 helical membrane-spanning segments follow: residues 16–36 (TEFLPVSSSAHLVLVPWLFGF), 40–60 (GLVFDVALHLGTLVAVLVYFW), 82–102 (FWFLVVATIPGVVVGYFLEDI), 107–127 (LRAPLLIGVLLIMMGGVLYLA), 140–160 (IRFGDAMAIGLSQALAIIPGV), 183–203 (FSFLLSTPIIFGAGLMQMLKM), 211–231 (SFVLGVFTSAVVGFLAIWFLI), and 239–259 (FNIFVIYRVLLGLTVIVIALL).

This sequence belongs to the UppP family.

The protein resides in the cell membrane. The catalysed reaction is di-trans,octa-cis-undecaprenyl diphosphate + H2O = di-trans,octa-cis-undecaprenyl phosphate + phosphate + H(+). Catalyzes the dephosphorylation of undecaprenyl diphosphate (UPP). Confers resistance to bacitracin. This Desulforudis audaxviator (strain MP104C) protein is Undecaprenyl-diphosphatase.